Consider the following 63-residue polypeptide: Large ribosomal subunit protein uL29 (63 aa).

The protein belongs to the universal ribosomal protein uL29 family.

This is Large ribosomal subunit protein uL29 from Vibrio cholerae serotype O1 (strain ATCC 39541 / Classical Ogawa 395 / O395).